The chain runs to 200 residues: Ribosomal RNA large subunit methyltransferase E (200 aa).

S-adenosyl-L-methionine is bound by residues G51, W53, D71, D90, and D112. Catalysis depends on K151, which acts as the Proton acceptor.

The protein belongs to the class I-like SAM-binding methyltransferase superfamily. RNA methyltransferase RlmE family.

The protein localises to the cytoplasm. The catalysed reaction is uridine(2552) in 23S rRNA + S-adenosyl-L-methionine = 2'-O-methyluridine(2552) in 23S rRNA + S-adenosyl-L-homocysteine + H(+). Its function is as follows. Specifically methylates the uridine in position 2552 of 23S rRNA at the 2'-O position of the ribose in the fully assembled 50S ribosomal subunit. This is Ribosomal RNA large subunit methyltransferase E from Treponema pallidum (strain Nichols).